The following is a 224-amino-acid chain: Ion-translocating oxidoreductase complex subunit E (224 aa).

5 helical membrane passes run 51 to 71 (LGLG…VSLF), 81 to 101 (IPIY…LMNA), 105 to 125 (SLYQ…IVIG), 140 to 160 (MFDG…LGAI), and 194 to 214 (HFLL…ILAI).

Belongs to the NqrDE/RnfAE family. The complex is composed of six subunits: RnfA, RnfB, RnfC, RnfD, RnfE and RnfG.

It localises to the cell inner membrane. Its function is as follows. Part of a membrane-bound complex that couples electron transfer with translocation of ions across the membrane. In Pasteurella multocida (strain Pm70), this protein is Ion-translocating oxidoreductase complex subunit E.